The chain runs to 325 residues: tRNA N6-adenosine threonylcarbamoyltransferase (325 aa).

Positions 111 and 115 each coordinate Fe cation. Substrate contacts are provided by residues L134 to G138, D167, G180, D184, and N284. D312 lines the Fe cation pocket.

It belongs to the KAE1 / TsaD family. Requires Fe(2+) as cofactor.

It is found in the cytoplasm. It catalyses the reaction L-threonylcarbamoyladenylate + adenosine(37) in tRNA = N(6)-L-threonylcarbamoyladenosine(37) in tRNA + AMP + H(+). Its function is as follows. Required for the formation of a threonylcarbamoyl group on adenosine at position 37 (t(6)A37) in tRNAs that read codons beginning with adenine. Is involved in the transfer of the threonylcarbamoyl moiety of threonylcarbamoyl-AMP (TC-AMP) to the N6 group of A37, together with TsaE and TsaB. TsaD likely plays a direct catalytic role in this reaction. This chain is tRNA N6-adenosine threonylcarbamoyltransferase, found in Trichodesmium erythraeum (strain IMS101).